The following is a 322-amino-acid chain: Malate dehydrogenase (322 aa).

NAD(+) is bound by residues 10–15 (GSGQIG) and Asp34. Arg83 and Arg89 together coordinate substrate. Residues Asn96 and 119 to 121 (ITN) each bind NAD(+). The substrate site is built by Asn121 and Arg152. Catalysis depends on His176, which acts as the Proton acceptor.

It belongs to the LDH/MDH superfamily. MDH type 3 family.

The catalysed reaction is (S)-malate + NAD(+) = oxaloacetate + NADH + H(+). In terms of biological role, catalyzes the reversible oxidation of malate to oxaloacetate. The sequence is that of Malate dehydrogenase from Nitrobacter winogradskyi (strain ATCC 25391 / DSM 10237 / CIP 104748 / NCIMB 11846 / Nb-255).